The following is a 241-amino-acid chain: MAPK phosphothreonine lyase (241 aa).

The Proton donor role is filled by H106. K136 (proton acceptor) is an active-site residue.

It belongs to the phosphothreonine lyase family.

The protein resides in the secreted. Its function is as follows. Secreted effector that irreversibly inactivates host MAP kinases by catalyzing the dephosphorylation of the phosphothreonine residue in the pT-X-pY motif present in MAPKs, via a beta-elimination reaction leading to a dehydrobutyrine residue. In Salmonella choleraesuis (strain SC-B67), this protein is MAPK phosphothreonine lyase (spvC).